Here is a 383-residue protein sequence, read N- to C-terminus: Erythronate-4-phosphate dehydrogenase (383 aa).

Substrate contacts are provided by serine 45 and threonine 66. NAD(+) contacts are provided by residues aspartate 146, threonine 174, 205 to 207 (ASR), and aspartate 231. Arginine 207 is a catalytic residue. Residue glutamate 236 is part of the active site. Histidine 253 (proton donor) is an active-site residue. NAD(+) is bound at residue glycine 256. Tyrosine 257 serves as a coordination point for substrate.

Belongs to the D-isomer specific 2-hydroxyacid dehydrogenase family. PdxB subfamily. In terms of assembly, homodimer.

It localises to the cytoplasm. It catalyses the reaction 4-phospho-D-erythronate + NAD(+) = (R)-3-hydroxy-2-oxo-4-phosphooxybutanoate + NADH + H(+). It functions in the pathway cofactor biosynthesis; pyridoxine 5'-phosphate biosynthesis; pyridoxine 5'-phosphate from D-erythrose 4-phosphate: step 2/5. Catalyzes the oxidation of erythronate-4-phosphate to 3-hydroxy-2-oxo-4-phosphonooxybutanoate. The chain is Erythronate-4-phosphate dehydrogenase from Pseudomonas entomophila (strain L48).